The following is a 439-amino-acid chain: Dihydroorotase (439 aa).

Zn(2+)-binding residues include H73 and H75. Residues 75–77 and N107 each bind substrate; that span reads HLR. 3 residues coordinate Zn(2+): D165, H192, and H245. A substrate-binding site is contributed by N291. A Zn(2+)-binding site is contributed by D318. D318 is a catalytic residue. A substrate-binding site is contributed by H322.

It belongs to the metallo-dependent hydrolases superfamily. DHOase family. Class I DHOase subfamily. Zn(2+) serves as cofactor.

It catalyses the reaction (S)-dihydroorotate + H2O = N-carbamoyl-L-aspartate + H(+). It participates in pyrimidine metabolism; UMP biosynthesis via de novo pathway; (S)-dihydroorotate from bicarbonate: step 3/3. Functionally, catalyzes the reversible cyclization of carbamoyl aspartate to dihydroorotate. The chain is Dihydroorotase from Syntrophobacter fumaroxidans (strain DSM 10017 / MPOB).